A 476-amino-acid chain; its full sequence is Sensor protein CzcS (476 aa).

The N-terminal stretch at 1–35 is a signal peptide; the sequence is MRPGTSITPLSLTRRLGLFFALVLSIALASMGAFA. Residues 37–158 lie on the Periplasmic side of the membrane; sequence YSLAAQLEAR…DRKQVTARFR (122 aa). The chain crosses the membrane as a helical span at residues 159-179; it reads TTLVLGTTVGVILTALVGAAI. Over 180-476 the chain is Cytoplasmic; sequence TRRELEPAHV…RPSQDRPVVG (297 aa). The 54-residue stretch at 181–234 folds into the HAMP domain; the sequence is RRELEPAHVLIKQINRISVERLSYRVDMPPKPTEVRDIASAFNAMLQRLEDGYQ. The region spanning 242–455 is the Histidine kinase domain; the sequence is DLAHDLRTPL…TRFTLRFPLN (214 aa). His245 carries the phosphohistidine; by autocatalysis modification.

The protein resides in the cell inner membrane. It carries out the reaction ATP + protein L-histidine = ADP + protein N-phospho-L-histidine.. Functionally, member of the two-component regulatory system CzcS/CzcR involved in the control of cobalt, zinc and cadmium homeostasis. Probably activates CzcR by phosphorylation. This Cupriavidus metallidurans (strain ATCC 43123 / DSM 2839 / NBRC 102507 / CH34) (Ralstonia metallidurans) protein is Sensor protein CzcS (czcS).